We begin with the raw amino-acid sequence, 178 residues long: Riboflavin kinase (178 aa).

Residues threonine 39 and asparagine 41 each contribute to the Mg(2+) site. Catalysis depends on glutamate 116, which acts as the Nucleophile.

The protein belongs to the flavokinase family. Zn(2+) is required as a cofactor. The cofactor is Mg(2+).

It carries out the reaction riboflavin + ATP = FMN + ADP + H(+). Its pathway is cofactor biosynthesis; FMN biosynthesis; FMN from riboflavin (ATP route): step 1/1. Its function is as follows. Catalyzes the phosphorylation of riboflavin (vitamin B2) to form flavin mononucleotide (FMN) coenzyme. The protein is Riboflavin kinase (FMN1) of Scheffersomyces stipitis (strain ATCC 58785 / CBS 6054 / NBRC 10063 / NRRL Y-11545) (Yeast).